The sequence spans 1058 residues: Carbamoyl phosphate synthase large chain (1058 aa).

Residues 1-401 form a carboxyphosphate synthetic domain region; that stretch reads MPKRTDIQKI…SLLKACRSLE (401 aa). The ATP site is built by Arg-129, Arg-169, Gly-175, Gly-176, Arg-208, Ile-210, Glu-215, Gly-241, Ile-242, His-243, Gln-284, and Glu-298. Positions 133 to 327 constitute an ATP-grasp 1 domain; it reads KQLMEELEQP…IAKLAAKIAV (195 aa). The Mg(2+) site is built by Gln-284, Glu-298, and Asn-300. 3 residues coordinate Mn(2+): Gln-284, Glu-298, and Asn-300. The interval 402–546 is oligomerization domain; it reads IGVHHNEIPE…YSTYGWENES (145 aa). Positions 547–929 are carbamoyl phosphate synthetic domain; that stretch reads IRSDKESVLV…ALYKAFEASY (383 aa). Positions 671 to 861 constitute an ATP-grasp 2 domain; sequence EQALKELDIP…MAQVATKLIL (191 aa). Residues Arg-707, Ser-746, Ile-748, Glu-752, Gly-777, Val-778, His-779, Ser-780, Gln-820, and Glu-832 each coordinate ATP. Mg(2+)-binding residues include Gln-820, Glu-832, and Asn-834. Residues Gln-820, Glu-832, and Asn-834 each coordinate Mn(2+). One can recognise an MGS-like domain in the interval 930–1058; the sequence is LHLPTFGNVV…ESRSFVTEAI (129 aa). The allosteric domain stretch occupies residues 930–1058; that stretch reads LHLPTFGNVV…ESRSFVTEAI (129 aa).

This sequence belongs to the CarB family. Composed of two chains; the small (or glutamine) chain promotes the hydrolysis of glutamine to ammonia, which is used by the large (or ammonia) chain to synthesize carbamoyl phosphate. Tetramer of heterodimers (alpha,beta)4. It depends on Mg(2+) as a cofactor. The cofactor is Mn(2+).

It catalyses the reaction hydrogencarbonate + L-glutamine + 2 ATP + H2O = carbamoyl phosphate + L-glutamate + 2 ADP + phosphate + 2 H(+). The catalysed reaction is hydrogencarbonate + NH4(+) + 2 ATP = carbamoyl phosphate + 2 ADP + phosphate + 2 H(+). The protein operates within amino-acid biosynthesis; L-arginine biosynthesis; carbamoyl phosphate from bicarbonate: step 1/1. It functions in the pathway pyrimidine metabolism; UMP biosynthesis via de novo pathway; (S)-dihydroorotate from bicarbonate: step 1/3. Large subunit of the glutamine-dependent carbamoyl phosphate synthetase (CPSase). CPSase catalyzes the formation of carbamoyl phosphate from the ammonia moiety of glutamine, carbonate, and phosphate donated by ATP, constituting the first step of 2 biosynthetic pathways, one leading to arginine and/or urea and the other to pyrimidine nucleotides. The large subunit (synthetase) binds the substrates ammonia (free or transferred from glutamine from the small subunit), hydrogencarbonate and ATP and carries out an ATP-coupled ligase reaction, activating hydrogencarbonate by forming carboxy phosphate which reacts with ammonia to form carbamoyl phosphate. The sequence is that of Carbamoyl phosphate synthase large chain from Streptococcus pneumoniae serotype 19F (strain G54).